Reading from the N-terminus, the 226-residue chain is Lysoplasmalogenase TMEM86B (226 aa).

The Cytoplasmic portion of the chain corresponds to 1–23 (MDARKEGLPLETLFSDQYPQVRR). The helical transmembrane segment at 24–40 (WLAPFILACSLYFLLWI) threads the bilayer. At 41–46 (PVDQPS) the chain is on the extracellular side. Residues 47–68 (WVSALIKCQPILCLVVFLWAVA) traverse the membrane as a helical segment. Residues 69–74 (PGGSST) lie on the Cytoplasmic side of the membrane. A helical transmembrane segment spans residues 75-93 (WLLQGALVCSAVGDACLIW). At 94-99 (PEAFFY) the chain is on the extracellular side. Residues 100–117 (GTAAFSVAHLFYLGAFGL) form a helical membrane-spanning segment. Over 118–123 (TPLQPG) the chain is Cytoplasmic. A helical transmembrane segment spans residues 124–140 (LLLCTTLASLTYYSFLL). Over 141-146 (LHLEQG) the chain is Extracellular. A helical membrane pass occupies residues 147-163 (MVLPVMAYGLILNSMLW). Residues 164-171 (RSLVWGGS) are Cytoplasmic-facing. A helical transmembrane segment spans residues 172-188 (ASWGAVLFTFSDGVLAW). Residues 189–199 (DTFVYSLPFAR) lie on the Extracellular side of the membrane. The helical transmembrane segment at 200–218 (LVTMSTYYAAQLLLILSAL) threads the bilayer. Residues 219–226 (RNPGLKTH) lie on the Cytoplasmic side of the membrane.

This sequence belongs to the TMEM86 family. In terms of assembly, homodimer. Enriched in liver. Also detected in brain and testis.

The protein localises to the endoplasmic reticulum membrane. It localises to the cytoplasm. It catalyses the reaction a 1-O-(1Z-alkenyl)-sn-glycero-3-phosphocholine + H2O = a 2,3-saturated aldehyde + sn-glycerol 3-phosphocholine. The enzyme catalyses a 1-O-(1Z-alkenyl)-sn-glycero-3-phosphoethanolamine + H2O = a 2,3-saturated aldehyde + sn-glycero-3-phosphoethanolamine. Competitively inhibited by lysophosphatidic acid. Functionally, catalyzes the hydrolysis of the vinyl ether bond of choline or ethanolamine lysoplasmalogens, forming fatty aldehyde and glycerophosphocholine or glycerophosphoethanolamine, respectively and is specific for the sn-2-deacylated (lyso) form of plasmalogen. The protein is Lysoplasmalogenase TMEM86B (Tmem86b) of Mus musculus (Mouse).